The chain runs to 165 residues: Pro-MCH (165 aa).

An N-terminal signal peptide occupies residues 1 to 21 (MAKMSLSSYMLMLAFSLFSHG). Over residues 69–82 (DESGFMKDDDDKTT) the composition is skewed to basic and acidic residues. Positions 69 to 89 (DESGFMKDDDDKTTKNTGSKQ) are disordered. Isoleucine 143 bears the Isoleucine amide mark. Cysteine 153 and cysteine 162 are joined by a disulfide.

Belongs to the melanin-concentrating hormone family. Post-translationally, pro-MCH is processed differentially in the brain and in peripheral organs producing two neuropeptides; NEI and MCH. A third peptide, NGE, may also be produced. Preferential processing in neurons by prohormone convertase 2 (PC2) generates NEI. MCH is generated in neurons of the lateral hypothalmic area by several prohormone convertases including PC1/3, PC2 and PC5/6. MCH is present in all regions of the brain and in neurointermediate lobe of the pituarity gland, with highest concentrations in the hypothalamus. Also expressed to a much lesser extent in stomach, lamina propria of both duodenum and colon, ovary, thymus, pancreas, adrenal gland and testis (spermatogonia, early spermatocytes and Sertoli cells). Weak expression in heart and lung. The other peptides are expressed at least in Sertoli cells, nei being also expressed in brain, stomach and proximal duodenum. In brain exclusively mature mch and nei peptides are present. In peripheral tissues a large product, encompassing the NEI and MCH domains of the precursor, is found predominantly. At low levels fully processed MCH and NEI peptides are present in gut. No expression in peripheral blood.

The protein resides in the secreted. Functionally, MCH inhibits ACTH secretion at the end of the light on period which corresponds to the peak of the circadian rhythm in ACTH. Inhibits also stress induced ACTH release during the light off period of the cycle. Involved as a neurotransmitter or neuromodulator in a broad array of neuronal functions. Stimulates sexual behavior when injected into the ventromedial nucleus, this effect is antagonized by NEI. In the medial preoptic area, stimulates anxiety and sexual behavior. Antagonizes inhibitory effect of melanotropin alpha on exploration behavior. Its function is as follows. NEI can influence differentiation of neuronal processes in brain neurons. Affects the content of neurofilament protein in neuritogenesis (in vitro). May also be a neuromodulatory factor. In behavioral tests, it stimulates exploration and anxiety when injected into the ventromedial nucleus. Also stimulates grooming, locomotion and rearing. May antagonize the inhibitory effect of mch on ACTH release. Reduces dopamine and dopac release in the ventromedial nucleus. The chain is Pro-MCH (Pmch) from Rattus norvegicus (Rat).